The following is a 287-amino-acid chain: Protease HtpX (287 aa).

2 helical membrane passes run 4–24 (IFLL…VMSI) and 33–53 (GGLL…SLAI). Histidine 139 serves as a coordination point for Zn(2+). Glutamate 140 is an active-site residue. Histidine 143 contacts Zn(2+). The next 2 helical transmembrane spans lie at 154 to 174 (LIQG…AGII) and 195 to 215 (AVVF…VAYF). Glutamate 220 is a binding site for Zn(2+).

This sequence belongs to the peptidase M48B family. The cofactor is Zn(2+).

The protein localises to the cell inner membrane. In Shewanella sp. (strain ANA-3), this protein is Protease HtpX.